Reading from the N-terminus, the 613-residue chain is Cysteine--tRNA ligase (613 aa).

The tract at residues 1 to 130 is disordered; the sequence is MSAGAGTPRR…TRGGVARSGN (130 aa). Tandem repeats lie at residues 36–49, 50–63, 64–77, 78–91, 92–105, and 106–119. The tract at residues 36–119 is 6 X 14 AA tandem repeats of P-[TA]-R-G-D-K-K-R-A-[RP]-R-[PL]-G-V; that stretch reads PTRGDKKRAR…DKKRARRPGV (84 aa). A cysteinyl-tRNA synthetase region spans residues 148–613; the sequence is VTIRLYDTSA…QGPRWSLGSR (466 aa). Position 176 (Cys-176) interacts with Zn(2+). The 'HIGH' region signature appears at 178-188; the sequence is ATVQAAPHIGH. Positions 355, 380, and 384 each coordinate Zn(2+). Residues 411-415 carry the 'KMSKS' region motif; the sequence is KMSKS. Lys-414 serves as a coordination point for ATP.

Belongs to the class-I aminoacyl-tRNA synthetase family. Monomer. Zn(2+) is required as a cofactor.

The protein resides in the cytoplasm. It carries out the reaction tRNA(Cys) + L-cysteine + ATP = L-cysteinyl-tRNA(Cys) + AMP + diphosphate. The chain is Cysteine--tRNA ligase from Streptomyces coelicolor (strain ATCC BAA-471 / A3(2) / M145).